We begin with the raw amino-acid sequence, 132 residues long: D-ribose pyranase (132 aa).

The active-site Proton donor is His-20. Residues Asp-28, His-99, and 121–123 (YSN) contribute to the substrate site.

The protein belongs to the RbsD / FucU family. RbsD subfamily. In terms of assembly, homodecamer.

It localises to the cytoplasm. The catalysed reaction is beta-D-ribopyranose = beta-D-ribofuranose. Its pathway is carbohydrate metabolism; D-ribose degradation; D-ribose 5-phosphate from beta-D-ribopyranose: step 1/2. Its function is as follows. Catalyzes the interconversion of beta-pyran and beta-furan forms of D-ribose. The chain is D-ribose pyranase from Lactococcus lactis subsp. cremoris (strain MG1363).